The chain runs to 312 residues: Ribosomal RNA small subunit methyltransferase H (312 aa).

Residues 33-35 (GGY), D51, F78, D97, and Q104 contribute to the S-adenosyl-L-methionine site.

The protein belongs to the methyltransferase superfamily. RsmH family.

The protein resides in the cytoplasm. The catalysed reaction is cytidine(1402) in 16S rRNA + S-adenosyl-L-methionine = N(4)-methylcytidine(1402) in 16S rRNA + S-adenosyl-L-homocysteine + H(+). In terms of biological role, specifically methylates the N4 position of cytidine in position 1402 (C1402) of 16S rRNA. The sequence is that of Ribosomal RNA small subunit methyltransferase H from Orientia tsutsugamushi (strain Ikeda) (Rickettsia tsutsugamushi).